Consider the following 316-residue polypeptide: Ribosomal RNA small subunit methyltransferase H (316 aa).

S-adenosyl-L-methionine-binding positions include Ser-35–His-37, Asp-55, Phe-84, Asp-105, and Gln-112.

Belongs to the methyltransferase superfamily. RsmH family.

Its subcellular location is the cytoplasm. The catalysed reaction is cytidine(1402) in 16S rRNA + S-adenosyl-L-methionine = N(4)-methylcytidine(1402) in 16S rRNA + S-adenosyl-L-homocysteine + H(+). Specifically methylates the N4 position of cytidine in position 1402 (C1402) of 16S rRNA. The chain is Ribosomal RNA small subunit methyltransferase H from Streptococcus pyogenes serotype M6 (strain ATCC BAA-946 / MGAS10394).